The chain runs to 201 residues: GTP cyclohydrolase 1 (201 aa).

Zn(2+) contacts are provided by cysteine 90, histidine 93, and cysteine 163.

This sequence belongs to the GTP cyclohydrolase I family. In terms of assembly, toroid-shaped homodecamer, composed of two pentamers of five dimers.

It catalyses the reaction GTP + H2O = 7,8-dihydroneopterin 3'-triphosphate + formate + H(+). It participates in cofactor biosynthesis; 7,8-dihydroneopterin triphosphate biosynthesis; 7,8-dihydroneopterin triphosphate from GTP: step 1/1. This is GTP cyclohydrolase 1 (folE) from Streptomyces coelicolor (strain ATCC BAA-471 / A3(2) / M145).